The chain runs to 394 residues: Putative 8-amino-7-oxononanoate synthase (394 aa).

Arg30 provides a ligand contact to substrate. A pyridoxal 5'-phosphate-binding site is contributed by Gly117–Tyr118. A substrate-binding site is contributed by His142. Pyridoxal 5'-phosphate-binding positions include Ser190, Asp215 to His218, and Thr246 to Lys249. Position 249 is an N6-(pyridoxal phosphate)lysine (Lys249). Thr364 serves as a coordination point for substrate.

It belongs to the class-II pyridoxal-phosphate-dependent aminotransferase family. BioF subfamily. In terms of assembly, homodimer. Pyridoxal 5'-phosphate is required as a cofactor.

It carries out the reaction 6-carboxyhexanoyl-[ACP] + L-alanine + H(+) = (8S)-8-amino-7-oxononanoate + holo-[ACP] + CO2. Its pathway is cofactor biosynthesis; biotin biosynthesis. Its function is as follows. Catalyzes the decarboxylative condensation of pimeloyl-[acyl-carrier protein] and L-alanine to produce 8-amino-7-oxononanoate (AON), [acyl-carrier protein], and carbon dioxide. The protein is Putative 8-amino-7-oxononanoate synthase (bioF) of Nostoc punctiforme (strain ATCC 29133 / PCC 73102).